A 377-amino-acid chain; its full sequence is 5-hydroxytryptamine receptor 1D (377 aa).

The interval 1 to 23 (MSPLNQSAEGLPQEASNRSLNAT) is disordered. Residues 1-38 (MSPLNQSAEGLPQEASNRSLNATETSEAWDPRTLQALK) lie on the Extracellular side of the membrane. 3 N-linked (GlcNAc...) asparagine glycosylation sites follow: Asn5, Asn17, and Asn21. The chain crosses the membrane as a helical span at residues 39–64 (ISLAVVLSVITLATVLSNAFVLTTIL). Residues 65-75 (LTRKLHTPANY) are Cytoplasmic-facing. A helical membrane pass occupies residues 76-97 (LIGSLATTDLLVSILVMPISIA). Residues 98-109 (YTITHTWNFGQI) lie on the Extracellular side of the membrane. The chain crosses the membrane as a helical span at residues 110–134 (LCDIWLSSDITCCTASILHLCVIAL). Cys111 and Cys188 are oxidised to a cystine. Asp118 and Cys122 together coordinate serotonin. Positions 135–137 (DRY) match the DRY motif; important for ligand-induced conformation changes motif. Residues 135-154 (DRYWAITDALEYSKRRTAGH) lie on the Cytoplasmic side of the membrane. The helical transmembrane segment at 155–176 (AATMIAIVWAISICISIPPLFW) threads the bilayer. The Extracellular portion of the chain corresponds to 177 to 194 (RQAKAQEEMSDCLVNTSQ). A helical membrane pass occupies residues 195–218 (ISYTIYSTCGAFYIPSVLLIILYG). At 219-300 (RIYRAARNRI…ISAARERKAT (82 aa)) the chain is on the cytoplasmic side. Residues 301 to 326 (KILGIILGAFIICWLPFFVVSLVLPI) traverse the membrane as a helical segment. Ser321 is a binding site for serotonin. The Extracellular segment spans residues 327–335 (CRDSCWIHP). A helical transmembrane segment spans residues 336-359 (ALFDFFTWLGYLNSLINPIIYTVF). The short motif at 352–356 (NPIIY) is the NPxxY motif; important for ligand-induced conformation changes and signaling element. At 360–377 (NEEFRQAFQKIVPFRKAS) the chain is on the cytoplasmic side.

The protein belongs to the G-protein coupled receptor 1 family. Homodimer. Heterodimer with HTR1B. In terms of tissue distribution, detected in brain neocortex and caudate nucleus (at protein level).

The protein resides in the cell membrane. G-protein coupled receptor for 5-hydroxytryptamine (serotonin). Also functions as a receptor for ergot alkaloid derivatives, various anxiolytic and antidepressant drugs and other psychoactive substances. Ligand binding causes a conformation change that triggers signaling via guanine nucleotide-binding proteins (G proteins) and modulates the activity of downstream effectors, such as adenylate cyclase. HTR1D is coupled to G(i)/G(o) G alpha proteins and mediates inhibitory neurotransmission by inhibiting adenylate cyclase activity. Regulates the release of 5-hydroxytryptamine in the brain, and thereby affects neural activity. May also play a role in regulating the release of other neurotransmitters. May play a role in vasoconstriction. The chain is 5-hydroxytryptamine receptor 1D from Homo sapiens (Human).